Consider the following 393-residue polypeptide: Formate-dependent phosphoribosylglycinamide formyltransferase (393 aa).

N(1)-(5-phospho-beta-D-ribosyl)glycinamide contacts are provided by residues 22–23 and Glu-82; that span reads EL. ATP contacts are provided by residues Arg-114, Lys-155, 160–165, 195–198, and Glu-203; these read SSGKGQ and EGFI. The region spanning 119–308 is the ATP-grasp domain; sequence RLAAEELDLP…QFALHARAIL (190 aa). Glu-267 and Glu-279 together coordinate Mg(2+). N(1)-(5-phospho-beta-D-ribosyl)glycinamide is bound by residues Asp-286, Lys-356, and 363-364; that span reads RR.

The protein belongs to the PurK/PurT family. In terms of assembly, homodimer.

The enzyme catalyses N(1)-(5-phospho-beta-D-ribosyl)glycinamide + formate + ATP = N(2)-formyl-N(1)-(5-phospho-beta-D-ribosyl)glycinamide + ADP + phosphate + H(+). It participates in purine metabolism; IMP biosynthesis via de novo pathway; N(2)-formyl-N(1)-(5-phospho-D-ribosyl)glycinamide from N(1)-(5-phospho-D-ribosyl)glycinamide (formate route): step 1/1. Its function is as follows. Involved in the de novo purine biosynthesis. Catalyzes the transfer of formate to 5-phospho-ribosyl-glycinamide (GAR), producing 5-phospho-ribosyl-N-formylglycinamide (FGAR). Formate is provided by PurU via hydrolysis of 10-formyl-tetrahydrofolate. The polypeptide is Formate-dependent phosphoribosylglycinamide formyltransferase (Pseudomonas entomophila (strain L48)).